The sequence spans 434 residues: 3-phosphoshikimate 1-carboxyvinyltransferase (434 aa).

Lys-22, Ser-23, and Arg-27 together coordinate 3-phosphoshikimate. Phosphoenolpyruvate is bound at residue Lys-22. Phosphoenolpyruvate-binding residues include Gly-93 and Arg-121. Residues Ser-168, Ser-169, Gln-170, Ser-199, Asp-320, and Lys-347 each coordinate 3-phosphoshikimate. Phosphoenolpyruvate is bound at residue Gln-170. The Proton acceptor role is filled by Asp-320. Phosphoenolpyruvate-binding residues include Arg-351, Arg-394, and Lys-419.

Belongs to the EPSP synthase family. In terms of assembly, monomer.

It is found in the cytoplasm. It catalyses the reaction 3-phosphoshikimate + phosphoenolpyruvate = 5-O-(1-carboxyvinyl)-3-phosphoshikimate + phosphate. It functions in the pathway metabolic intermediate biosynthesis; chorismate biosynthesis; chorismate from D-erythrose 4-phosphate and phosphoenolpyruvate: step 6/7. Catalyzes the transfer of the enolpyruvyl moiety of phosphoenolpyruvate (PEP) to the 5-hydroxyl of shikimate-3-phosphate (S3P) to produce enolpyruvyl shikimate-3-phosphate and inorganic phosphate. The chain is 3-phosphoshikimate 1-carboxyvinyltransferase from Burkholderia vietnamiensis (strain G4 / LMG 22486) (Burkholderia cepacia (strain R1808)).